A 930-amino-acid chain; its full sequence is Isoleucine--tRNA ligase (930 aa).

The 'HIGH' region signature appears at 57 to 67 (PYANGNIHVGH). Glu-554 contributes to the L-isoleucyl-5'-AMP binding site. Residues 595–599 (KMSKS) carry the 'KMSKS' region motif. Lys-598 lines the ATP pocket. Zn(2+) contacts are provided by Cys-888, Cys-891, Cys-908, and Cys-911.

The protein belongs to the class-I aminoacyl-tRNA synthetase family. IleS type 1 subfamily. Monomer. It depends on Zn(2+) as a cofactor.

The protein resides in the cytoplasm. It carries out the reaction tRNA(Ile) + L-isoleucine + ATP = L-isoleucyl-tRNA(Ile) + AMP + diphosphate. Its function is as follows. Catalyzes the attachment of isoleucine to tRNA(Ile). As IleRS can inadvertently accommodate and process structurally similar amino acids such as valine, to avoid such errors it has two additional distinct tRNA(Ile)-dependent editing activities. One activity is designated as 'pretransfer' editing and involves the hydrolysis of activated Val-AMP. The other activity is designated 'posttransfer' editing and involves deacylation of mischarged Val-tRNA(Ile). The chain is Isoleucine--tRNA ligase from Streptococcus pneumoniae (strain JJA).